The sequence spans 200 residues: NAD(P)H dehydrogenase (quinone) (200 aa).

The 188-residue stretch at 4 to 191 (VLVLYYSSYG…DIARYQGKHV (188 aa)) folds into the Flavodoxin-like domain. Residues 10–15 (SSYGHV) and 79–81 (TRF) contribute to the FMN site. Y12 lines the NAD(+) pocket. Substrate is bound at residue W99. FMN contacts are provided by residues 114–120 (STGTQHG) and H135.

Belongs to the WrbA family. Requires FMN as cofactor.

The enzyme catalyses a quinone + NADH + H(+) = a quinol + NAD(+). It carries out the reaction a quinone + NADPH + H(+) = a quinol + NADP(+). This chain is NAD(P)H dehydrogenase (quinone), found in Burkholderia cenocepacia (strain ATCC BAA-245 / DSM 16553 / LMG 16656 / NCTC 13227 / J2315 / CF5610) (Burkholderia cepacia (strain J2315)).